Here is a 608-residue protein sequence, read N- to C-terminus: Translation initiation factor RLI1 (608 aa).

2 4Fe-4S ferredoxin-type domains span residues 7–39 (RIAI…KLCI) and 46–75 (KIAF…IINL). ABC transporter domains are found at residues 70-320 (IQII…FLDG) and 345-568 (LQND…LKNL). 110–117 (GTNGIGKS) lines the ATP pocket. Serine 349 carries the phosphoserine modification. ATP is bound at residue 385–392 (GENGTGKT).

The protein belongs to the ABC transporter superfamily. ABCE family. Component of the multifactor complex (MFC) composed of at least RLI1, the eIF2 subunit SUI2, TIF5/eIF5, and the eIF3 subunits PRT1, HCR1, NIP1, RPG1, TIF34 and TIF35. The complex associates with pre-initiation complexes. Interacts with the complex YAE1:LTO1; the complex bridges the interaction between the CIA complex and RLI1.

Its subcellular location is the cytoplasm. The protein resides in the nucleus. Functionally, component of the multifactor complex (MFC) involved in translation initiation. Required for the binding of MFC to the 40S ribosome. Required for the processing and nuclear export of the 60S and 40S ribosomal subunits. In Saccharomyces cerevisiae (strain ATCC 204508 / S288c) (Baker's yeast), this protein is Translation initiation factor RLI1 (RLI1).